The sequence spans 419 residues: Creatine kinase S-type, mitochondrial (419 aa).

Residues 1 to 39 (MASAFSKLLTGRNASLLFTTLGTSALTTGYLLNRQKVSA) constitute a mitochondrion transit peptide. A cardiolipin-binding region spans residues 40 to 64 (DAREQHKLFPPSADYPDLRKHNNCM). In terms of domain architecture, Phosphagen kinase N-terminal spans 46-132 (KLFPPSADYP…FDPVIKLRHN (87 aa)). In terms of domain architecture, Phosphagen kinase C-terminal spans 159–401 (YVLSSRVRTG…NYLVDCEKKL (243 aa)). ATP is bound by residues 162 to 166 (SSRVR) and His225. Tyr255 carries the post-translational modification Phosphotyrosine. ATP is bound by residues Arg270, Arg326, 354 to 359 (RGTGGV), and Asp369. Thr356 carries the post-translational modification Phosphothreonine.

The protein belongs to the ATP:guanido phosphotransferase family. In terms of assembly, exists as an octamer composed of four CKMT2 homodimers.

It localises to the mitochondrion inner membrane. The enzyme catalyses creatine + ATP = N-phosphocreatine + ADP + H(+). Functionally, reversibly catalyzes the transfer of phosphate between ATP and various phosphogens (e.g. creatine phosphate). Creatine kinase isoenzymes play a central role in energy transduction in tissues with large, fluctuating energy demands, such as skeletal muscle, heart, brain and spermatozoa. In Mus musculus (Mouse), this protein is Creatine kinase S-type, mitochondrial (Ckmt2).